Here is a 94-residue protein sequence, read N- to C-terminus: Large ribosomal subunit protein bL25 (94 aa).

It belongs to the bacterial ribosomal protein bL25 family. Part of the 50S ribosomal subunit; part of the 5S rRNA/L5/L18/L25 subcomplex. Contacts the 5S rRNA. Binds to the 5S rRNA independently of L5 and L18.

Functionally, this is one of the proteins that binds to the 5S RNA in the ribosome where it forms part of the central protuberance. The chain is Large ribosomal subunit protein bL25 from Citrobacter koseri (strain ATCC BAA-895 / CDC 4225-83 / SGSC4696).